A 176-amino-acid polypeptide reads, in one-letter code: MKDLVPAWIDGALRPVGKLEAHQRGLRHKAVSVFVMRGPETLIQRRALDKYHTPGLWANTCCTHPLWDESPADCAVRRLREELGITGLYPAHRDRIEYRADVGNGLIEHEVVDLFIAEAPANLKVAPNPEEVAEVKWVDLYELNAQVKRRPERYTPWLRIYLAEHSERIFGTVATS.

Positions 22 and 28 each coordinate Mn(2+). Residues 26–160 (LRHKAVSVFV…PERYTPWLRI (135 aa)) form the Nudix hydrolase domain. Cys62 is a catalytic residue. Residue His64 coordinates Mn(2+). Glu82 provides a ligand contact to Mg(2+). Mn(2+) contacts are provided by Glu108 and Glu110. Glu110 is a catalytic residue.

It belongs to the IPP isomerase type 1 family. Mg(2+) is required as a cofactor. The cofactor is Mn(2+).

The protein localises to the cytoplasm. The enzyme catalyses isopentenyl diphosphate = dimethylallyl diphosphate. It functions in the pathway isoprenoid biosynthesis; dimethylallyl diphosphate biosynthesis; dimethylallyl diphosphate from isopentenyl diphosphate: step 1/1. The protein operates within porphyrin-containing compound metabolism; chlorophyll biosynthesis. Catalyzes the 1,3-allylic rearrangement of the homoallylic substrate isopentenyl (IPP) to its highly electrophilic allylic isomer, dimethylallyl diphosphate (DMAPP). The chain is Isopentenyl-diphosphate Delta-isomerase from Dinoroseobacter shibae (strain DSM 16493 / NCIMB 14021 / DFL 12).